The chain runs to 607 residues: UvrABC system protein C (607 aa).

A GIY-YIG domain is found at 16–94 (GRPGVYRMFD…IKEWRPPYNI (79 aa)). The UVR domain occupies 203–238 (QQLGNELNAEMEKAAMALDFEKAAELRDQIALLRRV).

It belongs to the UvrC family. Interacts with UvrB in an incision complex.

The protein localises to the cytoplasm. The UvrABC repair system catalyzes the recognition and processing of DNA lesions. UvrC both incises the 5' and 3' sides of the lesion. The N-terminal half is responsible for the 3' incision and the C-terminal half is responsible for the 5' incision. In Pseudomonas putida (strain ATCC 47054 / DSM 6125 / CFBP 8728 / NCIMB 11950 / KT2440), this protein is UvrABC system protein C.